A 478-amino-acid chain; its full sequence is Cytochrome P450 family 716 subfamily AD polypeptide 4 (478 aa).

A helical transmembrane segment spans residues 1-21 (MELFLPSVLLILTVFCFYYLF). C425 serves as a coordination point for heme.

It belongs to the cytochrome P450 family. Requires heme as cofactor. In terms of tissue distribution, mainly expressed in petioles and, to a lower extent, in roots.

The protein localises to the membrane. The catalysed reaction is (1S,3bR,4R,5aR,9aR,9bR,11aS)-1-[(4R)-5-[(2S)-3,3-dimethyloxiran-2-yl]-1,4-dihydroxybutan-2-yl]-3b,6,6,9a,11a-pentamethyl-7-oxo-1H,2H,3bH,4H,5H,5aH,6H,7H,9aH,9bH,10H,11H,11aH-cyclopenta[a]phenanthren-4-yl acetate + reduced [NADPH--hemoprotein reductase] + O2 = (1S,3bR,4R,5aR,9aR,9bR,11aS)-1-(1-hydroxy-4-oxobutan-2-yl)-3b,6,6,9a,11a-pentamethyl-7-oxo-1H,2H,3bH,4H,5H,5aH,6H,7H,9aH,9bH,10H,11H,11aH-cyclopenta[a]phenanthren-4-yl acetate + 2-methylpropanoate + oxidized [NADPH--hemoprotein reductase] + H2O + 2 H(+). It functions in the pathway secondary metabolite biosynthesis; terpenoid biosynthesis. Functionally, monooxygenase involved in the biosynthesis of limonoids triterpene natural products such as azadirachtin, an antifeedant widely used as bioinsecticide, and possessing many medicinal applications including anti-tumoral, anti-malarial, anti-rheumatic, antibacterial, anti-inflammatory, anti-pyretic and diuretic effects. Catalyzes the formation of (1S,3bR,4R,5aR,9aR,9bR,11aS)-1-(1-hydroxy-4-oxobutan-2-yl)-3b,6,6,9a,11a-pentamethyl-7-oxo-1H,2H,3bH,4H,5H,5aH,6H,7H,9aH,9bH,10H,11H,11aH-cyclopenta[a]phenanthren-4-yl acetate. In Melia azedarach (Chinaberry tree), this protein is Cytochrome P450 family 716 subfamily AD polypeptide 4.